Consider the following 435-residue polypeptide: MTLKIPIQEMVKMVGSLRSHGIDIPESMEINKKEKIYVAVTEKDLESKSSLVWAIQNSGGKEFCIVHVHQPIPGEMFHEQKLRLYRKEKDKAHKNSEKYLQICRQMQVTAEIIYIETDSVEKGILQLISQRGVTKLVMGAAADRHYSMRMRDLKSKKAIYIHREAPATCLIWFTCNGYLICSREARRANNLYLECASSNSLSQSDITRGTESIVKDDDHLIKLAVTEAEASKRKARFEACKREEAEKTAVDALKKAKQWENVYFEELKQRKETEKALRKRNDELEKMRSESETQITESYTVIRKLQEKNNLSMETFRGIREEQEELKIKLREVSKLKGKREEEEASTSNHREPPQYFICPITHDIMEDPHVAADGFTYEGEAISRWFERGHETSPMINKRLPHTSLVPNLALRSAIQEWLQLRELLNRPSACREI.

Residues 227-345 (EAEASKRKAR…LKGKREEEEA (119 aa)) are a coiled coil. The region spanning 352 to 426 (EPPQYFICPI…QEWLQLRELL (75 aa)) is the U-box domain.

It catalyses the reaction S-ubiquitinyl-[E2 ubiquitin-conjugating enzyme]-L-cysteine + [acceptor protein]-L-lysine = [E2 ubiquitin-conjugating enzyme]-L-cysteine + N(6)-ubiquitinyl-[acceptor protein]-L-lysine.. It functions in the pathway protein modification; protein ubiquitination. Functions as an E3 ubiquitin ligase. The chain is U-box domain-containing protein 36 (PUB36) from Arabidopsis thaliana (Mouse-ear cress).